The sequence spans 330 residues: Aspartate--ammonia ligase (330 aa).

Belongs to the class-II aminoacyl-tRNA synthetase family. AsnA subfamily.

The protein resides in the cytoplasm. It catalyses the reaction L-aspartate + NH4(+) + ATP = L-asparagine + AMP + diphosphate + H(+). It participates in amino-acid biosynthesis; L-asparagine biosynthesis; L-asparagine from L-aspartate (ammonia route): step 1/1. This chain is Aspartate--ammonia ligase, found in Klebsiella pneumoniae (strain 342).